A 485-amino-acid chain; its full sequence is Glutamyl-tRNA(Gln) amidotransferase subunit A (485 aa).

Catalysis depends on charge relay system residues lysine 78 and serine 153. Residue serine 177 is the Acyl-ester intermediate of the active site.

This sequence belongs to the amidase family. GatA subfamily. In terms of assembly, heterotrimer of A, B and C subunits.

The catalysed reaction is L-glutamyl-tRNA(Gln) + L-glutamine + ATP + H2O = L-glutaminyl-tRNA(Gln) + L-glutamate + ADP + phosphate + H(+). In terms of biological role, allows the formation of correctly charged Gln-tRNA(Gln) through the transamidation of misacylated Glu-tRNA(Gln) in organisms which lack glutaminyl-tRNA synthetase. The reaction takes place in the presence of glutamine and ATP through an activated gamma-phospho-Glu-tRNA(Gln). This chain is Glutamyl-tRNA(Gln) amidotransferase subunit A, found in Bacillus cereus (strain 03BB102).